We begin with the raw amino-acid sequence, 234 residues long: Small ribosomal subunit protein uS2 (234 aa).

Belongs to the universal ribosomal protein uS2 family.

The sequence is that of Small ribosomal subunit protein uS2 from Clostridium kluyveri (strain NBRC 12016).